Consider the following 120-residue polypeptide: Succinate dehydrogenase assembly factor 3, mitochondrial (120 aa).

A mitochondrion-targeting transit peptide spans 1-36 (MSRILMSQLTHPQRVRLLYKTILRLHRGLPAELRAL).

Belongs to the complex I LYR family. SDHAF3 subfamily. Interacts with SdhB within an SdhA-SdhB subcomplex.

The protein resides in the mitochondrion matrix. Its function is as follows. Plays an essential role in the assembly of succinate dehydrogenase (SDH), an enzyme complex (also referred to as respiratory complex II) that is a component of both the tricarboxylic acid (TCA) cycle and the mitochondrial electron transport chain, and which couples the oxidation of succinate to fumarate with the reduction of ubiquinone (coenzyme Q) to ubiquinol. Promotes maturation of the iron-sulfur protein subunit SdhB of the SDH catalytic dimer, protecting it from the deleterious effects of oxidants. In Drosophila melanogaster (Fruit fly), this protein is Succinate dehydrogenase assembly factor 3, mitochondrial.